A 227-amino-acid polypeptide reads, in one-letter code: Cytochrome c oxidase subunit 2 (227 aa).

The Mitochondrial intermembrane portion of the chain corresponds to 1-14 (MAYPMQLGFQDATS). Residues 15 to 45 (PIMEELLHFHDHTLMIVFLISSLVLYIISLM) form a helical membrane-spanning segment. The Mitochondrial matrix segment spans residues 46–59 (LTTKLTHTSTMDAQ). A helical membrane pass occupies residues 60–87 (EVETVWTILPAVILIMIALPSLRILYMM). Residues 88 to 227 (DEINNPSLTV…HFEKWSASML (140 aa)) lie on the Mitochondrial intermembrane side of the membrane. Cu cation is bound by residues histidine 161, cysteine 196, glutamate 198, cysteine 200, histidine 204, and methionine 207. Glutamate 198 lines the Mg(2+) pocket.

The protein belongs to the cytochrome c oxidase subunit 2 family. As to quaternary structure, component of the cytochrome c oxidase (complex IV, CIV), a multisubunit enzyme composed of 14 subunits. The complex is composed of a catalytic core of 3 subunits MT-CO1, MT-CO2 and MT-CO3, encoded in the mitochondrial DNA, and 11 supernumerary subunits COX4I, COX5A, COX5B, COX6A, COX6B, COX6C, COX7A, COX7B, COX7C, COX8 and NDUFA4, which are encoded in the nuclear genome. The complex exists as a monomer or a dimer and forms supercomplexes (SCs) in the inner mitochondrial membrane with NADH-ubiquinone oxidoreductase (complex I, CI) and ubiquinol-cytochrome c oxidoreductase (cytochrome b-c1 complex, complex III, CIII), resulting in different assemblies (supercomplex SCI(1)III(2)IV(1) and megacomplex MCI(2)III(2)IV(2)). Found in a complex with TMEM177, COA6, COX18, COX20, SCO1 and SCO2. Interacts with TMEM177 in a COX20-dependent manner. Interacts with COX20. Interacts with COX16. Requires Cu cation as cofactor.

It is found in the mitochondrion inner membrane. It carries out the reaction 4 Fe(II)-[cytochrome c] + O2 + 8 H(+)(in) = 4 Fe(III)-[cytochrome c] + 2 H2O + 4 H(+)(out). Its function is as follows. Component of the cytochrome c oxidase, the last enzyme in the mitochondrial electron transport chain which drives oxidative phosphorylation. The respiratory chain contains 3 multisubunit complexes succinate dehydrogenase (complex II, CII), ubiquinol-cytochrome c oxidoreductase (cytochrome b-c1 complex, complex III, CIII) and cytochrome c oxidase (complex IV, CIV), that cooperate to transfer electrons derived from NADH and succinate to molecular oxygen, creating an electrochemical gradient over the inner membrane that drives transmembrane transport and the ATP synthase. Cytochrome c oxidase is the component of the respiratory chain that catalyzes the reduction of oxygen to water. Electrons originating from reduced cytochrome c in the intermembrane space (IMS) are transferred via the dinuclear copper A center (CU(A)) of subunit 2 and heme A of subunit 1 to the active site in subunit 1, a binuclear center (BNC) formed by heme A3 and copper B (CU(B)). The BNC reduces molecular oxygen to 2 water molecules using 4 electrons from cytochrome c in the IMS and 4 protons from the mitochondrial matrix. This Tragelaphus imberbis (Lesser kudu) protein is Cytochrome c oxidase subunit 2 (MT-CO2).